Consider the following 502-residue polypeptide: Probable glycine dehydrogenase (decarboxylating) subunit 2 (502 aa).

K273 carries the N6-(pyridoxal phosphate)lysine modification.

It belongs to the GcvP family. C-terminal subunit subfamily. As to quaternary structure, the glycine cleavage system is composed of four proteins: P, T, L and H. In this organism, the P 'protein' is a heterodimer of two subunits. Pyridoxal 5'-phosphate is required as a cofactor.

The catalysed reaction is N(6)-[(R)-lipoyl]-L-lysyl-[glycine-cleavage complex H protein] + glycine + H(+) = N(6)-[(R)-S(8)-aminomethyldihydrolipoyl]-L-lysyl-[glycine-cleavage complex H protein] + CO2. The glycine cleavage system catalyzes the degradation of glycine. The P protein binds the alpha-amino group of glycine through its pyridoxal phosphate cofactor; CO(2) is released and the remaining methylamine moiety is then transferred to the lipoamide cofactor of the H protein. This is Probable glycine dehydrogenase (decarboxylating) subunit 2 from Pyrococcus horikoshii (strain ATCC 700860 / DSM 12428 / JCM 9974 / NBRC 100139 / OT-3).